The chain runs to 416 residues: MSILKMMLIYFAIFWVVNAAQLLDIDSQGVIPGAYIVVMKDRVSSLEFSSHVRWLKRTHRRNLAKRATPFTEGLGATWDIAGWQAYSGSFDEDTVQEILNHENVEFVEPNKEMQVASTIKQGNVTWGLSRISHKENSSHDYVSTYGEGENITFYGIDSGIDINQADFTGRARWGINLADHVDTDCNGHGTHTAGTVAGQKFGILKKASIVSIKILDCYGYGDITRYINGLNWAINDAKERGLLGKSVMNISLKTRRSRAVNEATVRAQEAGIFIAVAAGNQATSAEFYSPGSAPEVCTVGASTRNDTKAIFSNYGELGMSWSCILFYTTGTNVNHTVDLFAPGEYIRSTLPHNLTGLMSGTSMATPHVCGVGGLIMATEGLAPEKVCDRLKELANPTIQNPGFNTTNKLLYNGSGA.

The N-terminal stretch at 1 to 19 is a signal peptide; that stretch reads MSILKMMLIYFAIFWVVNA. The propeptide occupies 20 to 116; that stretch reads AQLLDIDSQG…VEPNKEMQVA (97 aa). Residues 35–115 form the Inhibitor I9 domain; that stretch reads YIVVMKDRVS…FVEPNKEMQV (81 aa). Asparagine 123, asparagine 136, and asparagine 150 each carry an N-linked (GlcNAc...) asparagine glycan. Positions 125-416 constitute a Peptidase S8 domain; sequence TWGLSRISHK…NKLLYNGSGA (292 aa). Active-site charge relay system residues include aspartate 157 and histidine 188. 4 N-linked (GlcNAc...) asparagine glycosylation sites follow: asparagine 249, asparagine 305, asparagine 334, and asparagine 353. Serine 362 serves as the catalytic Charge relay system. N-linked (GlcNAc...) asparagine glycans are attached at residues asparagine 404 and asparagine 412.

It belongs to the peptidase S8 family.

It is found in the secreted. Functionally, secreted subtilisin-like serine protease with keratinolytic activity that contributes to pathogenicity. This chain is Subtilisin-like protease 12 (SUB12), found in Arthroderma benhamiae (strain ATCC MYA-4681 / CBS 112371) (Trichophyton mentagrophytes).